The following is a 979-amino-acid chain: Protein argonaute PNH1 (979 aa).

The tract at residues 1–95 (MLEVLDMAPP…GGRAGAGPGP (95 aa)) is disordered. Residues 54-67 (AETAAATAAVAPPE) show a composition bias toward low complexity. The segment covering 77–86 (GRRRGGRGRG) has biased composition (basic residues). Residues 333-446 (PVIEFVAQIL…LPMEACKIVE (114 aa)) enclose the PAZ domain. The 322-residue stretch at 620 to 941 (LLLAILPDNN…AAFRARFYME (322 aa)) folds into the Piwi domain.

The protein belongs to the argonaute family. Ago subfamily.

It is found in the cytoplasm. Functionally, probably involved in the RNA silencing pathway. May bind to short RNAs such as microRNAs (miRNAs) or short interfering RNAs (siRNAs), and represses the translation of mRNAs which are complementary to them. Plays a role in the maintenance of the indeterminate state of the stem cells in the shoot apical meristem (SAM). Regulates leaf formation through vascular development and may be involved in determining the central domain of the leaf founder region. This chain is Protein argonaute PNH1 (PHN1), found in Oryza sativa subsp. japonica (Rice).